A 497-amino-acid polypeptide reads, in one-letter code: QYNPNTQPGRTSIVHLFEWRWADIALECERYLAPYGFGGVQVSPPNENVIITNPYRPWWERYQPVSYKLCTRSGNENEFRDMVTRCNNVGVRIYVDAVKNHMCGSGAGSGTHSTCGAYFNAGNRDSPAVPYSGWDFNDGKCRTGSGEIENYGDASQVRDCRLVGLLDLALEKDYVRSTVAGYMNHLIDIGVAGFRLDAAKHMWPGDIKAFLDKLHNLNTNWFSSGSRPFIYQEVIDLGGEPITSSQYFGNHRVTEFKYGAKLGTVIRKWNGEKMAYLKNWGEGWGFVPSDRALVFVDNHDNQRGHGAGGASILTFWDARLYKMAVGFMLAHPYGFTRVMSSFRWPRHFENGKDVNDWYGPPSNSDGSTKEVTINADSTCGNDWVCEHRWRQIRNMVIFRNVVDGEPFSNWWDNNSNQVAFGRGSKGFIVFNNDDWHMNVDLYTGLPAGTYCDVISGQKEGSRCTGIQVYVSGNGKANFQISNNAEDPFIAIHVGAKL.

Pyrrolidone carboxylic acid is present on Q1. Disulfide bonds link C28-C86, C70-C115, and C141-C160. Ca(2+) contacts are provided by N100, R158, and D167. R195 contributes to the chloride binding site. D197 functions as the Nucleophile in the catalytic mechanism. A Ca(2+)-binding site is contributed by H201. The active-site Proton donor is the E233. Chloride-binding residues include N298 and R337. Cystine bridges form between C379–C385 and C451–C463.

Belongs to the glycosyl hydrolase 13 family. As to quaternary structure, monomer. Requires Ca(2+) as cofactor. Chloride serves as cofactor.

It localises to the secreted. It is found in the extracellular space. The catalysed reaction is Endohydrolysis of (1-&gt;4)-alpha-D-glucosidic linkages in polysaccharides containing three or more (1-&gt;4)-alpha-linked D-glucose units.. The protein is Pancreatic alpha-amylase of Struthio camelus (Common ostrich).